Here is a 319-residue protein sequence, read N- to C-terminus: MAALSSNWKKLQAKLKEESASKPSLKRKPETPATNPPTKKPKVQKSFTKTLKAAKSAQTSDKKKMGGVHSSKIEETAPGTSTSLALWAEDHDVSAEALAEAYNLGAKDNSMMLAAAKDKINHGLTEGIEIGKYIAIDCEMVGVGPGGHESALARVSIVDFHGVQIYDSYVKPKEKVTNWRTAVSGISQKSMRFARDFEEVQAEIDKLLRGRILVGHDLKHDLEALILSHPGKDIRDTAKFSGFKKYANGRKPSLRVLAQQLLGVEIQGGEHSSIEDARATMLLFRKHKSAFDVDHANRYAPKTASGGGQKGNKPKKKKK.

The tract at residues 1-75 is disordered; the sequence is MAALSSNWKK…GGVHSSKIEE (75 aa). The region spanning 132 to 293 is the Exonuclease domain; the sequence is KYIAIDCEMV…FRKHKSAFDV (162 aa). The tract at residues 295 to 319 is disordered; that stretch reads HANRYAPKTASGGGQKGNKPKKKKK.

It belongs to the REXO4 family.

The protein localises to the nucleus. In terms of biological role, exoribonuclease involved in ribosome biosynthesis. Involved in the processing of ITS1, the internal transcribed spacer localized between the 18S and 5.8S rRNAs. The chain is RNA exonuclease 4 (REX4) from Gibberella zeae (strain ATCC MYA-4620 / CBS 123657 / FGSC 9075 / NRRL 31084 / PH-1) (Wheat head blight fungus).